The primary structure comprises 333 residues: MAVRRDSVWKYCWGVLMVLCRTAISKSIVLEPIYWNSSNSKFLPGQGLVLYPQIGDKLDIICPKVDSKTVGQYEYYKVYMVDKDQADRCTIKKENTPLLNCAKPDQDIKFTIKFQEFSPNLWGLEFQKNKDYYIISTSNGSLEGLDNQEGGVCQTRAMKILMKVGQDASSAGSTRNKDPTRRPELEAGTNGRSSTTSPFVKPNPGSSTDGNSAGHSGNNILGSEVALFAGIASGCIIFIVIIITLVVLLLKYRRRHRKHSPQHTTTLSLSTLATPKRSGNNNGSEPSDIIIPLRTADSVFCPHYEKVSGDYGHPVYIVQEMPPQSPANIYYKV.

The N-terminal stretch at 1–27 (MAVRRDSVWKYCWGVLMVLCRTAISKS) is a signal peptide. One can recognise an Ephrin RBD domain in the interval 28–164 (IVLEPIYWNS…TRAMKILMKV (137 aa)). The Extracellular portion of the chain corresponds to 28–229 (IVLEPIYWNS…ILGSEVALFA (202 aa)). Residue N36 is glycosylated (N-linked (GlcNAc...) asparagine). 2 cysteine pairs are disulfide-bonded: C62–C101 and C89–C153. N-linked (GlcNAc...) asparagine glycosylation is present at N139. The disordered stretch occupies residues 165 to 213 (GQDASSAGSTRNKDPTRRPELEAGTNGRSSTTSPFVKPNPGSSTDGNSA). The segment covering 175–185 (RNKDPTRRPEL) has biased composition (basic and acidic residues). A compositionally biased stretch (polar residues) spans 190–213 (NGRSSTTSPFVKPNPGSSTDGNSA). The helical transmembrane segment at 230–250 (GIASGCIIFIVIIITLVVLLL) threads the bilayer. Residues 251-333 (KYRRRHRKHS…QSPANIYYKV (83 aa)) are Cytoplasmic-facing. Residue S260 is modified to Phosphoserine. Position 274 is a phosphothreonine (T274). R277 carries the post-translational modification Omega-N-methylarginine. A PDZ-binding motif is present at residues 331 to 333 (YKV).

It belongs to the ephrin family. In terms of assembly, interacts with PDZRN3. Binds to the receptor tyrosine kinases EPHA4, EPHB4 and EPHA3. As to quaternary structure, (Microbial infection) Interacts with Hendra virus and Nipah virus G protein. Post-translationally, inducible phosphorylation of tyrosine residues in the cytoplasmic domain. In terms of tissue distribution, lung and kidney.

Its subcellular location is the cell membrane. The protein localises to the cell junction. The protein resides in the adherens junction. Functionally, cell surface transmembrane ligand for Eph receptors, a family of receptor tyrosine kinases which are crucial for migration, repulsion and adhesion during neuronal, vascular and epithelial development. Binds promiscuously Eph receptors residing on adjacent cells, leading to contact-dependent bidirectional signaling into neighboring cells. The signaling pathway downstream of the receptor is referred to as forward signaling while the signaling pathway downstream of the ephrin ligand is referred to as reverse signaling. Binds to receptor tyrosine kinase including EPHA4, EPHA3 and EPHB4. Together with EPHB4 plays a central role in heart morphogenesis and angiogenesis through regulation of cell adhesion and cell migration. EPHB4-mediated forward signaling controls cellular repulsion and segregation from EFNB2-expressing cells. May play a role in constraining the orientation of longitudinally projecting axons. (Microbial infection) Acts as a receptor for Hendra virus and Nipah virus. This Homo sapiens (Human) protein is Ephrin-B2 (EFNB2).